The sequence spans 427 residues: ATP-sensitive inward rectifier potassium channel 12 (427 aa).

The Cytoplasmic portion of the chain corresponds to 1 to 77; it reads MTAASRANPY…LADMFTTCVD (77 aa). Residue cysteine 75 is modified to S-nitrosocysteine. Residues 78-104 traverse the membrane as a helical segment; it reads IRWRYMLLIFSLAFLASWLLFGIIFWV. Arginine 79 and arginine 81 together coordinate a 1,2-diacyl-sn-glycero-3-phospho-(1D-myo-inositol-4,5-bisphosphate). Residues 105 to 129 lie on the Extracellular side of the membrane; the sequence is IAVAHGDLEPAEGRGRTPCVLQVHG. A disulfide bridge links cysteine 123 with cysteine 155. Residues 130-146 constitute an intramembrane region (helical; Pore-forming); it reads FMAAFLFSIETQTTIGY. Threonine 143, isoleucine 144, glycine 145, and tyrosine 146 together coordinate K(+). Residues 143 to 148 carry the Selectivity filter motif; the sequence is TIGYGL. Over 147-155 the chain is Extracellular; that stretch reads GLRCVTEEC. Residues 156–183 traverse the membrane as a helical segment; that stretch reads PVAVFMVVAQSIVGCIIDSFMIGAIMAK. A 1,2-diacyl-sn-glycero-3-phospho-(1D-myo-inositol-4,5-bisphosphate) contacts are provided by lysine 183 and lysine 188. Over 184 to 427 the chain is Cytoplasmic; sequence MGRPKKRAQT…ERPYRRESEI (244 aa). The segment at 387-427 is disordered; the sequence is DEEDEVATDRDGRSPQPEHDFDRLQASSGALERPYRRESEI. A compositionally biased stretch (basic and acidic residues) spans 393–409; that stretch reads ATDRDGRSPQPEHDFDR. The short motif at 425–427 is the PDZ-binding element; sequence SEI.

This sequence belongs to the inward rectifier-type potassium channel (TC 1.A.2.1) family. KCNJ12 subfamily. Homotetramer. Forms heteromer with KCNJ4. Can form heteromeric channels with Kir2.6/KCNJ18. Association, via its PDZ-recognition domain, with LIN7A, LIN7B, LIN7C, DLG1, CASK and APBA1 plays a key role in its localization and trafficking. As to expression, highest level in cerebellum. Moderately found in kidney, forebrain and skeletal muscle. Not detected in uterus, liver and pancreas.

It localises to the membrane. It is found in the cell membrane. Its subcellular location is the sarcolemma. The protein resides in the T-tubule. The enzyme catalyses K(+)(in) = K(+)(out). Its activity is regulated as follows. Activated by phosphatidylinositol 4,5-biphosphate (PtdIns(4,5)P2). PtdIns(4,5)P2 binding to the cytoplasmic side of the channel triggers a conformation change leading to channel opening. Inhibited by Ba(2+). In terms of biological role, inward rectifying potassium channel that probably participates in controlling the resting membrane potential in electrically excitable cells. It probably participates in establishing action potential waveform and excitability of neuronal and muscle tissues. Inward rectifier potassium channels are characterized by a greater tendency to allow potassium to flow into the cell rather than out of it. Their voltage dependence is regulated by the concentration of extracellular potassium; as external potassium is raised, the voltage range of the channel opening shifts to more positive voltages. The inward rectification is mainly due to the blockage of outward current by internal magnesium. The sequence is that of ATP-sensitive inward rectifier potassium channel 12 (Kcnj12) from Rattus norvegicus (Rat).